Consider the following 342-residue polypeptide: Holliday junction branch migration complex subunit RuvB (342 aa).

The tract at residues 1 to 179 (MTNILSPEKS…FGIPMRLNFY (179 aa)) is large ATPase domain (RuvB-L). ATP is bound by residues Ile18, Arg19, Gly60, Lys63, Thr64, Thr65, 126–128 (EDF), Arg169, Tyr179, and Arg216. Residue Thr64 participates in Mg(2+) binding. A small ATPAse domain (RuvB-S) region spans residues 180-250 (NTGELKKVLN…ISDFGLNRLE (71 aa)). The interval 253–342 (RIGLDSNDYR…HQFNIFNENE (90 aa)) is head domain (RuvB-H). Residues Arg289, Arg308, and Arg313 each coordinate DNA.

It belongs to the RuvB family. In terms of assembly, homohexamer. Forms an RuvA(8)-RuvB(12)-Holliday junction (HJ) complex. HJ DNA is sandwiched between 2 RuvA tetramers; dsDNA enters through RuvA and exits via RuvB. An RuvB hexamer assembles on each DNA strand where it exits the tetramer. Each RuvB hexamer is contacted by two RuvA subunits (via domain III) on 2 adjacent RuvB subunits; this complex drives branch migration. In the full resolvosome a probable DNA-RuvA(4)-RuvB(12)-RuvC(2) complex forms which resolves the HJ.

It is found in the cytoplasm. It catalyses the reaction ATP + H2O = ADP + phosphate + H(+). In terms of biological role, the RuvA-RuvB-RuvC complex processes Holliday junction (HJ) DNA during genetic recombination and DNA repair, while the RuvA-RuvB complex plays an important role in the rescue of blocked DNA replication forks via replication fork reversal (RFR). RuvA specifically binds to HJ cruciform DNA, conferring on it an open structure. The RuvB hexamer acts as an ATP-dependent pump, pulling dsDNA into and through the RuvAB complex. RuvB forms 2 homohexamers on either side of HJ DNA bound by 1 or 2 RuvA tetramers; 4 subunits per hexamer contact DNA at a time. Coordinated motions by a converter formed by DNA-disengaged RuvB subunits stimulates ATP hydrolysis and nucleotide exchange. Immobilization of the converter enables RuvB to convert the ATP-contained energy into a lever motion, pulling 2 nucleotides of DNA out of the RuvA tetramer per ATP hydrolyzed, thus driving DNA branch migration. The RuvB motors rotate together with the DNA substrate, which together with the progressing nucleotide cycle form the mechanistic basis for DNA recombination by continuous HJ branch migration. Branch migration allows RuvC to scan DNA until it finds its consensus sequence, where it cleaves and resolves cruciform DNA. The sequence is that of Holliday junction branch migration complex subunit RuvB from Rickettsia conorii (strain ATCC VR-613 / Malish 7).